A 349-amino-acid polypeptide reads, in one-letter code: 5-deoxyribose 1-phosphate isomerase (349 aa).

Residues 49 to 51, arginine 92, and glutamine 199 contribute to the substrate site; that span reads RGA. Aspartate 240 functions as the Proton donor in the catalytic mechanism. Substrate is bound at residue 250–251; the sequence is NK.

It belongs to the EIF-2B alpha/beta/delta subunits family. DrdI subfamily.

The enzyme catalyses 5-deoxy-alpha-D-ribose 1-phosphate = 5-deoxy-D-ribulose 1-phosphate. It participates in carbohydrate degradation. In terms of biological role, catalyzes the isomerization of 5-deoxy-alpha-D-ribose 1-phosphate to 5-deoxy-D-ribulose 1-phosphate, as part of a 5-deoxyribose salvage pathway that recycles this toxic radical SAM enzyme by-product to mainstream metabolites. This chain is 5-deoxyribose 1-phosphate isomerase, found in Clostridium botulinum (strain Loch Maree / Type A3).